Consider the following 481-residue polypeptide: Transcription factor TGA9 (481 aa).

The segment at 91-181 (QTLPTESSKS…GKQLDAKTLR (91 aa)) is disordered. Over residues 97–109 (SSKSGGESSDSGS) the composition is skewed to low complexity. A compositionally biased stretch (polar residues) spans 110–126 (ANFSGKAESQQPESPMS). Residues 143-155 (SSSTSGLPSTSRT) show a composition bias toward low complexity. The Nuclear localization signal signature appears at 165 to 172 (KRKATTSG). Positions 176–220 (DAKTLRRLAQNREAARKSRLRKKAYVQQLESSRIKLSQLEQELQR) constitute a bZIP domain. The interval 178–198 (KTLRRLAQNREAARKSRLRKK) is basic motif. The interval 204–218 (LESSRIKLSQLEQEL) is leucine-zipper. A DOG1 domain is found at 242–450 (AAIFDMEYGR…RALSSLWLSR (209 aa)).

It belongs to the bZIP family. In terms of assembly, homodimer. Binds DNA as a dimer. Interacts with floral glutaredoxins GRXC7/ROXY1 and GRXC8/ROXY2 in the nucleus. Interacts with TGA1, TGA2, TGA3, TGA4, TGA5, TGA6, TGA7, TGA10 and PAN. Mostly expressed in stems, inflorescence apex and flowers, and, to a lower extent, in seedlings, leaves and siliques.

The protein resides in the nucleus. Its function is as follows. Together with TGA10, basic leucine-zipper transcription factor required for anther development, probably via the activation of SPL expression in anthers and via the regulation of genes with functions in early and middle tapetal development. Required for signaling responses to pathogen-associated molecular patterns (PAMPs) such as flg22 that involves chloroplastic reactive oxygen species (ROS) production and subsequent expression of H(2)O(2)-responsive genes. This chain is Transcription factor TGA9, found in Arabidopsis thaliana (Mouse-ear cress).